A 122-amino-acid chain; its full sequence is MARIAGIDLPKKKKIEYALPYIYGIGLTTSRKILKDTGIDPEKRVYELTEDEVSILNKEIQSNYIVEGELRKIVQLNIKELMDLGCYRGLRHRRGLPVRGQRTKTNARTRKGKRKTVGAKAK.

The segment at 98–122 (VRGQRTKTNARTRKGKRKTVGAKAK) is disordered.

This sequence belongs to the universal ribosomal protein uS13 family. In terms of assembly, part of the 30S ribosomal subunit. Forms a loose heterodimer with protein S19. Forms two bridges to the 50S subunit in the 70S ribosome.

In terms of biological role, located at the top of the head of the 30S subunit, it contacts several helices of the 16S rRNA. In the 70S ribosome it contacts the 23S rRNA (bridge B1a) and protein L5 of the 50S subunit (bridge B1b), connecting the 2 subunits; these bridges are implicated in subunit movement. Contacts the tRNAs in the A and P-sites. In Nautilia profundicola (strain ATCC BAA-1463 / DSM 18972 / AmH), this protein is Small ribosomal subunit protein uS13.